Consider the following 508-residue polypeptide: Aldehyde dehydrogenase (508 aa).

Residues Glu-264 and Cys-303 contribute to the active site.

The protein belongs to the aldehyde dehydrogenase family.

The enzyme catalyses acetaldehyde + NAD(+) + H2O = acetate + NADH + 2 H(+). It participates in organosulfur degradation. Functionally, catalyzes the NAD(+)-dependent oxidation of acetaldehyde to acetate. The sequence is that of Aldehyde dehydrogenase from Paracoccus denitrificans (strain Pd 1222).